Consider the following 894-residue polypeptide: Valine--tRNA ligase (894 aa).

The span at 1–22 (MKSIQTPSKSHTNTKETPVMSQ) shows a compositional bias: polar residues. Positions 1–28 (MKSIQTPSKSHTNTKETPVMSQEETKGY) are disordered. Residues 69 to 79 (PNVTGSLHIGH) carry the 'HIGH' region motif. Positions 554–558 (KMSKS) match the 'KMSKS' region motif. Lysine 557 serves as a coordination point for ATP. A coiled-coil region spans residues 832-894 (IISRLEKQQE…VKVELQGIKG (63 aa)).

It belongs to the class-I aminoacyl-tRNA synthetase family. ValS type 1 subfamily. Monomer.

Its subcellular location is the cytoplasm. It carries out the reaction tRNA(Val) + L-valine + ATP = L-valyl-tRNA(Val) + AMP + diphosphate. Catalyzes the attachment of valine to tRNA(Val). As ValRS can inadvertently accommodate and process structurally similar amino acids such as threonine, to avoid such errors, it has a 'posttransfer' editing activity that hydrolyzes mischarged Thr-tRNA(Val) in a tRNA-dependent manner. The chain is Valine--tRNA ligase from Wolinella succinogenes (strain ATCC 29543 / DSM 1740 / CCUG 13145 / JCM 31913 / LMG 7466 / NCTC 11488 / FDC 602W) (Vibrio succinogenes).